A 1706-amino-acid chain; its full sequence is Brefeldin A-inhibited guanine nucleotide-exchange protein 4 (1706 aa).

The SEC7 domain maps to 555–742 (MLEQRRAYKI…GSLYDRVVKE (188 aa)). Residue Glu-657 is part of the active site.

As to quaternary structure, homodimer.

The protein resides in the cytoplasm. It localises to the cytosol. It is found in the membrane. Inhibited by brefeldin A. Its function is as follows. Activates the ARF proteins by exchanging bound GDP for free GTP. Plays a role in vesicular protein sorting. This chain is Brefeldin A-inhibited guanine nucleotide-exchange protein 4 (BIG4), found in Arabidopsis thaliana (Mouse-ear cress).